A 342-amino-acid chain; its full sequence is Succinylglutamate desuccinylase (342 aa).

Zn(2+) is bound by residues histidine 63, glutamate 66, and histidine 159. Glutamate 222 is an active-site residue.

The protein belongs to the AspA/AstE family. Succinylglutamate desuccinylase subfamily. It depends on Zn(2+) as a cofactor.

It catalyses the reaction N-succinyl-L-glutamate + H2O = L-glutamate + succinate. Its pathway is amino-acid degradation; L-arginine degradation via AST pathway; L-glutamate and succinate from L-arginine: step 5/5. Its function is as follows. Transforms N(2)-succinylglutamate into succinate and glutamate. The chain is Succinylglutamate desuccinylase from Paraburkholderia xenovorans (strain LB400).